A 210-amino-acid chain; its full sequence is Imidazoleglycerol-phosphate dehydratase (210 aa).

The disordered stretch occupies residues 1–23 (MNDSLLSNGHAPPLRQATVDRQT).

Belongs to the imidazoleglycerol-phosphate dehydratase family.

The protein localises to the cytoplasm. The catalysed reaction is D-erythro-1-(imidazol-4-yl)glycerol 3-phosphate = 3-(imidazol-4-yl)-2-oxopropyl phosphate + H2O. Its pathway is amino-acid biosynthesis; L-histidine biosynthesis; L-histidine from 5-phospho-alpha-D-ribose 1-diphosphate: step 6/9. The sequence is that of Imidazoleglycerol-phosphate dehydratase from Thermosynechococcus vestitus (strain NIES-2133 / IAM M-273 / BP-1).